The following is a 220-amino-acid chain: Protein GrpE (220 aa).

The interval M1–S22 is disordered.

Belongs to the GrpE family. Homodimer.

It localises to the cytoplasm. Functionally, participates actively in the response to hyperosmotic and heat shock by preventing the aggregation of stress-denatured proteins, in association with DnaK and GrpE. It is the nucleotide exchange factor for DnaK and may function as a thermosensor. Unfolded proteins bind initially to DnaJ; upon interaction with the DnaJ-bound protein, DnaK hydrolyzes its bound ATP, resulting in the formation of a stable complex. GrpE releases ADP from DnaK; ATP binding to DnaK triggers the release of the substrate protein, thus completing the reaction cycle. Several rounds of ATP-dependent interactions between DnaJ, DnaK and GrpE are required for fully efficient folding. In Bartonella henselae (strain ATCC 49882 / DSM 28221 / CCUG 30454 / Houston 1) (Rochalimaea henselae), this protein is Protein GrpE.